Reading from the N-terminus, the 638-residue chain is Neuroendocrine convertase 2 (638 aa).

A signal peptide spans 1–25 (MRGGCISQGKAAAGLLFCVMVFASA). Positions 26–109 (ERPVFTNHFL…QQEGFNRKKR (84 aa)) are excised as a propeptide. Residues 129–453 (QWYLINTGQA…YGVLDAGAMV (325 aa)) form the Peptidase S8 domain. Active-site charge relay system residues include D167 and H208. 2 cysteine pairs are disulfide-bonded: C225/C376 and C317/C347. N375 carries N-linked (GlcNAc...) asparagine glycosylation. The active-site Charge relay system is the S384. The region spanning 461–597 (TVPERFHCVG…TLMLHGTQSA (137 aa)) is the P/Homo B domain. Cysteines 468 and 494 form a disulfide. N514 and N524 each carry an N-linked (GlcNAc...) asparagine glycan.

This sequence belongs to the peptidase S8 family. Furin subfamily.

It is found in the cytoplasmic vesicle. The protein resides in the secretory vesicle. The protein localises to the secreted. It catalyses the reaction Release of protein hormones and neuropeptides from their precursors, generally by hydrolysis of -Lys-Arg-|- bonds.. Its function is as follows. Serine endopeptidase which is involved in the processing of hormone and other protein precursors at sites comprised of pairs of basic amino acid residues. Responsible for the release of glucagon from proglucagon in pancreatic A cells. The protein is Neuroendocrine convertase 2 (PCSK2) of Bos taurus (Bovine).